Consider the following 117-residue polypeptide: Mini-circle uncharacterized 12.9 kDa protein (117 aa).

This chain is Mini-circle uncharacterized 12.9 kDa protein, found in Streptomyces coelicolor (strain ATCC BAA-471 / A3(2) / M145).